A 229-amino-acid polypeptide reads, in one-letter code: MSVSLSRLERQLGYTFKDQELMVLALTHRSFAGRNNERLEFLGDAILNFVAGEALFDRFPLAREGQLSRLRARLVKGETLAVLARGFDLGDYLRLGSGELKSGGFRRESILADALEALIGAIYLDAGMEVARERVLAWLAGEFEGLTLVDTNKDPKTRLQEFLQSRGCELPRYEVVDIQGEPHCRTFFVECEVVLLNEKSRGQGVSRRIAEQVAAAAALIALGVENGND.

In terms of domain architecture, RNase III spans 5–127 (LSRLERQLGY…LIGAIYLDAG (123 aa)). E40 contributes to the Mg(2+) binding site. The active site involves D44. Residues D113 and E116 each coordinate Mg(2+). The active site involves E116. The DRBM domain maps to 154-224 (DPKTRLQEFL…AAAALIALGV (71 aa)).

Belongs to the ribonuclease III family. In terms of assembly, homodimer. Mg(2+) is required as a cofactor.

The protein resides in the cytoplasm. It carries out the reaction Endonucleolytic cleavage to 5'-phosphomonoester.. Its function is as follows. Digests double-stranded RNA. Involved in the processing of primary rRNA transcript to yield the immediate precursors to the large and small rRNAs (23S and 16S). Processes some mRNAs, and tRNAs when they are encoded in the rRNA operon. Processes pre-crRNA and tracrRNA of type II CRISPR loci if present in the organism. The protein is Ribonuclease 3 of Pseudomonas fluorescens (strain Pf0-1).